We begin with the raw amino-acid sequence, 885 residues long: Leucine--tRNA ligase (885 aa).

The short motif at 48–58 (PYPSGKLHMGH) is the 'HIGH' region element. The short motif at 639–643 (TMSKS) is the 'KMSKS' region element. K642 is a binding site for ATP.

It belongs to the class-I aminoacyl-tRNA synthetase family.

The protein localises to the cytoplasm. It catalyses the reaction tRNA(Leu) + L-leucine + ATP = L-leucyl-tRNA(Leu) + AMP + diphosphate. In Bordetella avium (strain 197N), this protein is Leucine--tRNA ligase.